The primary structure comprises 272 residues: Putative phosphoenolpyruvate synthase regulatory protein (272 aa).

Residue 152-159 participates in ADP binding; it reads GVSRCGKT.

The protein belongs to the pyruvate, phosphate/water dikinase regulatory protein family. PSRP subfamily.

It carries out the reaction [pyruvate, water dikinase] + ADP = [pyruvate, water dikinase]-phosphate + AMP + H(+). The enzyme catalyses [pyruvate, water dikinase]-phosphate + phosphate + H(+) = [pyruvate, water dikinase] + diphosphate. Bifunctional serine/threonine kinase and phosphorylase involved in the regulation of the phosphoenolpyruvate synthase (PEPS) by catalyzing its phosphorylation/dephosphorylation. The sequence is that of Putative phosphoenolpyruvate synthase regulatory protein from Pseudomonas putida (strain ATCC 47054 / DSM 6125 / CFBP 8728 / NCIMB 11950 / KT2440).